The primary structure comprises 375 residues: Alanine racemase (375 aa).

Lys-40 serves as the catalytic Proton acceptor; specific for D-alanine. Lys-40 carries the post-translational modification N6-(pyridoxal phosphate)lysine. Arg-140 is a substrate binding site. Tyr-268 (proton acceptor; specific for L-alanine) is an active-site residue. Met-315 is a substrate binding site.

The protein belongs to the alanine racemase family. It depends on pyridoxal 5'-phosphate as a cofactor.

It carries out the reaction L-alanine = D-alanine. Its pathway is amino-acid biosynthesis; D-alanine biosynthesis; D-alanine from L-alanine: step 1/1. Its function is as follows. Catalyzes the interconversion of L-alanine and D-alanine. May also act on other amino acids. The chain is Alanine racemase (alr) from Limosilactobacillus reuteri (strain DSM 20016) (Lactobacillus reuteri).